The primary structure comprises 560 residues: NAD(P)H-quinone oxidoreductase chain 4-3 (560 aa).

The next 14 membrane-spanning stretches (helical) occupy residues 5–25, 35–55, 86–106, 114–134, 135–155, 168–188, 208–228, 242–262, 273–293, 310–330, 331–351, 374–394, 417–437, and 488–508; these read FPWLTAIILLPLVASAFIPLL, WYALGVGIADFVLMCYTFWHH, ISMPLVLLAGFVTTLSMLAAW, LFYFLMLVLYSAQIGVFVAQD, LLLFFIMWELELVPVYLLVSI, FLLYTAAASIFILIAGLAMAL, ALELLLYAGLLIAFGVKLAIF, SAPVSMILAGVLLKMGGYGLI, HIYFAPVLATLGVINIIYGGL, VSHMGFVLLGIASFTDVGVSG, AMLQMLSHGLIAAVLFFLAGV, VFALFTAGTMASLALPGMSGF, VMVFLAAVGVILTPIYLLSML, and VFIAVSFLVLIIGVGVYPKIA.

Belongs to the complex I subunit 4 family.

It localises to the cellular thylakoid membrane. It carries out the reaction a plastoquinone + NADH + (n+1) H(+)(in) = a plastoquinol + NAD(+) + n H(+)(out). The catalysed reaction is a plastoquinone + NADPH + (n+1) H(+)(in) = a plastoquinol + NADP(+) + n H(+)(out). In terms of biological role, NDH-1 shuttles electrons from NAD(P)H, via FMN and iron-sulfur (Fe-S) centers, to quinones in the respiratory chain. The immediate electron acceptor for the enzyme in this species is believed to be plastoquinone. Couples the redox reaction to proton translocation (for every two electrons transferred, four hydrogen ions are translocated across the cytoplasmic membrane), and thus conserves the redox energy in a proton gradient. This is NAD(P)H-quinone oxidoreductase chain 4-3 (ndhD3) from Nostoc sp. (strain PCC 7120 / SAG 25.82 / UTEX 2576).